Here is a 470-residue protein sequence, read N- to C-terminus: Suppressor of SWI4 1 homolog (470 aa).

The region spanning 29–292 is the Brix domain; sequence PHSFVFTRGR…LIKIQEGVGN (264 aa). Phosphoserine is present on residues S238 and S240. Disordered stretches follow at residues 240-264 and 323-470; these read SEVE…GNMQ and AQRQ…RRRN. The span at 342 to 355 shows a compositional bias: basic residues; that stretch reads AHKKKSLAGIKRAR. Phosphoserine is present on S362. Residue K441 is modified to N6-acetyllysine. Basic residues predominate over residues 447 to 457; sequence QRGKAKPRPRA.

The protein localises to the nucleus. It is found in the nucleolus. Its function is as follows. May have a role in cell growth. The protein is Suppressor of SWI4 1 homolog (Ppan) of Mus musculus (Mouse).